The chain runs to 122 residues: Holo-[acyl-carrier-protein] synthase (122 aa).

The Mg(2+) site is built by aspartate 9 and glutamate 58.

Belongs to the P-Pant transferase superfamily. AcpS family. It depends on Mg(2+) as a cofactor.

It localises to the cytoplasm. The enzyme catalyses apo-[ACP] + CoA = holo-[ACP] + adenosine 3',5'-bisphosphate + H(+). In terms of biological role, transfers the 4'-phosphopantetheine moiety from coenzyme A to a Ser of acyl-carrier-protein. The chain is Holo-[acyl-carrier-protein] synthase from Chlamydia caviae (strain ATCC VR-813 / DSM 19441 / 03DC25 / GPIC) (Chlamydophila caviae).